Reading from the N-terminus, the 232-residue chain is Vesicle transport through interaction with t-SNAREs homolog 1B (232 aa).

A2 is subject to N-acetylalanine. Interaction with CLINT1 stretches follow at residues 2–23 and 69–73; these read ATSA…GLHE and APLSF. Topologically, residues 2 to 208 are cytoplasmic; the sequence is ATSAASSEHF…SRKVTTNKLL (207 aa). Residues 35–98 adopt a coiled-coil conformation; sequence MAGTEEKKKL…AKLHREVRST (64 aa). Phosphothreonine is present on T103. R107 carries the omega-N-methylarginine modification. S138 is modified (phosphoserine). A coiled-coil region spans residues 161–198; that stretch reads SEIIEELGEQRDQLERTKSRLVNTSENLSKSRKILRSM. Residues 209-229 form a helical; Anchor for type IV membrane protein membrane-spanning segment; sequence LSIVILLELAILGGLVYYKFL. The Vesicular segment spans residues 230–232; sequence RRH.

The protein belongs to the VTI1 family. As to quaternary structure, forms a SNARE complex with STX7, STX8 and VAMP8 which functions in the homotypic fusion of late endosomes. Component of the SNARE complex composed of STX7, STX8, VAMP7 and VIT1B that is required for heterotypic fusion of late endosomes with lysosomes. May interact with STX17. Interacts with CLINT1.

It localises to the early endosome membrane. Its subcellular location is the late endosome membrane. It is found in the lysosome membrane. The protein resides in the cytoplasmic granule. The protein localises to the recycling endosome membrane. Functionally, V-SNARE that mediates vesicle transport pathways through interactions with t-SNAREs on the target membrane. These interactions are proposed to mediate aspects of the specificity of vesicle trafficking and to promote fusion of the lipid bilayers. May be concerned with increased secretion of cytokines associated with cellular senescence. This is Vesicle transport through interaction with t-SNAREs homolog 1B (VTI1B) from Bos taurus (Bovine).